Reading from the N-terminus, the 199-residue chain is MSACPAPRSPFRWLHAFTLCLLLAVLAGCVSVPKPMAGAGEDVFSRVGRFAITVTESDGKQQAVQGGFAWRDDGGSYLLDLTNPLGSTEARVEGRPGMAVLTRANGERLAAEHPDALAEDALGSPVPVTGLRDWLRGRLMAGAAPDGLERDAQGRPTAFEQDGWNARLSRYDAQGPQLLVLQRQEPGRRILVRLVITQP.

The N-terminal stretch at M1–G28 is a signal peptide. C29 carries N-palmitoyl cysteine lipidation. The S-diacylglycerol cysteine moiety is linked to residue C29.

Belongs to the LolB family. As to quaternary structure, monomer.

It localises to the cell outer membrane. In terms of biological role, plays a critical role in the incorporation of lipoproteins in the outer membrane after they are released by the LolA protein. The protein is Outer-membrane lipoprotein LolB of Bordetella bronchiseptica (strain ATCC BAA-588 / NCTC 13252 / RB50) (Alcaligenes bronchisepticus).